A 216-amino-acid polypeptide reads, in one-letter code: uncharacterized protein (216 aa).

4Fe-4S ferredoxin-type domains are found at residues 160–189 (DDKP…IDEK) and 188–216 (EKPK…ALLP). Cys-169, Cys-172, Cys-175, Cys-179, Cys-197, Cys-200, Cys-203, and Cys-207 together coordinate [4Fe-4S] cluster.

Belongs to the FrhG family.

This is an uncharacterized protein from Methanocaldococcus jannaschii (strain ATCC 43067 / DSM 2661 / JAL-1 / JCM 10045 / NBRC 100440) (Methanococcus jannaschii).